A 61-amino-acid polypeptide reads, in one-letter code: Small ribosomal subunit protein uS14 (61 aa).

Positions 24, 27, 40, and 43 each coordinate Zn(2+).

Belongs to the universal ribosomal protein uS14 family. Zinc-binding uS14 subfamily. Part of the 30S ribosomal subunit. Contacts proteins S3 and S10. Zn(2+) serves as cofactor.

Binds 16S rRNA, required for the assembly of 30S particles and may also be responsible for determining the conformation of the 16S rRNA at the A site. The protein is Small ribosomal subunit protein uS14 of Beutenbergia cavernae (strain ATCC BAA-8 / DSM 12333 / CCUG 43141 / JCM 11478 / NBRC 16432 / NCIMB 13614 / HKI 0122).